Here is a 312-residue protein sequence, read N- to C-terminus: tRNA-cytidine(32) 2-sulfurtransferase (312 aa).

A PP-loop motif motif is present at residues 47-52 (SGGKDS). 3 residues coordinate [4Fe-4S] cluster: Cys122, Cys125, and Cys213.

Belongs to the TtcA family. Homodimer. Mg(2+) serves as cofactor. Requires [4Fe-4S] cluster as cofactor.

The protein localises to the cytoplasm. The enzyme catalyses cytidine(32) in tRNA + S-sulfanyl-L-cysteinyl-[cysteine desulfurase] + AH2 + ATP = 2-thiocytidine(32) in tRNA + L-cysteinyl-[cysteine desulfurase] + A + AMP + diphosphate + H(+). It functions in the pathway tRNA modification. Its function is as follows. Catalyzes the ATP-dependent 2-thiolation of cytidine in position 32 of tRNA, to form 2-thiocytidine (s(2)C32). The sulfur atoms are provided by the cysteine/cysteine desulfurase (IscS) system. The chain is tRNA-cytidine(32) 2-sulfurtransferase from Shewanella frigidimarina (strain NCIMB 400).